We begin with the raw amino-acid sequence, 643 residues long: Complement component C1q receptor (643 aa).

An N-terminal signal peptide occupies residues 1–23; it reads MVTSTGLLLLLGLLGQLWAGAAA. The Extracellular portion of the chain corresponds to 24–571; the sequence is DSEAVVCEGT…HSDSDTDGQK (548 aa). Residues 31–173 form the C-type lectin domain; that stretch reads EGTACYTAHW…CGTPDAPGNS (143 aa). Intrachain disulfides connect C140–C164, C261–C272, C268–C282, C284–C297, C303–C314, C308–C325, C327–C340, C346–C355, C351–C364, C366–C380, C386–C397, C393–C406, C408–C422, C428–C437, C433–C446, and C448–C461. 2 consecutive EGF-like domains span residues 257-298 and 299-341; these read PKFG…VTCA and SRNP…VHCV. The N-linked (GlcNAc...) asparagine glycan is linked to N322. Residues 342 to 381 enclose the EGF-like 3; calcium-binding domain; the sequence is DIDECEDSPCDQECINTPGGFHCECWVGYQSSGSKEEACE. An EGF-like 4; calcium-binding domain is found at 382-423; that stretch reads DVDECTAAYSPCAQGCTNTDGSFYCSCKEGYIMSGEDSTQCE. Residues 424–462 enclose the EGF-like 5; calcium-binding domain; it reads DIDECLGNPCDTLCINTDGSFRCGCPAGFELAPNGVSCT. Positions 469–517 are disordered; sequence ELPARPPQKEDKGDGKESTVPLTEMPGSLNGSKDVSNRAQTTDLSIQSD. Residues 475-485 are compositionally biased toward basic and acidic residues; that stretch reads PQKEDKGDGKE. The span at 497 to 517 shows a compositional bias: polar residues; it reads LNGSKDVSNRAQTTDLSIQSD. N498 carries N-linked (GlcNAc...) asparagine glycosylation. A helical transmembrane segment spans residues 572–592; it reads LLLFYILGTVVAISLLLALAL. At 593 to 643 the chain is on the cytoplasmic side; sequence GLLIYLKRKAKKEEIKEKKAQNAADSYSWIPERAESRAPENQYSPTPGTDC. Residues 606 to 643 form a disordered region; that stretch reads EIKEKKAQNAADSYSWIPERAESRAPENQYSPTPGTDC. A Phosphoserine modification is found at S618. Residues Y619 and Y635 each carry the phosphotyrosine modification. Positions 631 to 643 are enriched in polar residues; it reads PENQYSPTPGTDC.

As to quaternary structure, homodimer. Interacts with C1QBP; the association may represent a cell surface C1q receptor. Interacts with surfactant protein A/SFTPA1. Interacts with multimerin-2/MMRN2. Interacts with DAG1; this interaction plays an important role in endothelial cell migration. Interacts with CBL. Interacts with IGFBP7. Interacts with VEGFR2. N- and O-glycosylated. In terms of processing, phosphorylated on Tyr-619 and Tyr-635 by SRC; these phosphorylations promote endothelial cell adhesion and migration. In terms of tissue distribution, widely expressed. Highly expressed in lung and heart. Expressed at lower level in brain, thymus, liver, spleen, intestine, kidney, adrenal gland, muscle and testis. Expressed on endothelial cells, platelets, undifferentiated monocytes and circulating natural killer cells.

The protein resides in the cell membrane. Cell surface receptor that plays a role in various physiological processes including inflammation, phagocytosis, and cell adhesion. Plays a role in phagocytosis and enhances the uptake of apoptotic cells and immune complexes by acting as a receptor for defense collagens including surfactant protein A/SFTPA1, C1q, and mannose-binding lectin (MBL2). Plays a role in the regulation of endothelial cell function and adhesion by activating angiogenesis. Mechanistically, exerts its angiogenic function by associating with beta-dystroglycan, leading to SRC-dependent phosphorylation and subsequent recruitment of CBL. In turn, CBL provides a docking site for downstream signaling components, such as CRKL to enhance cell migration. Participates in angiogenesis also by acting as a receptor for the ECM pan-endothelial glycoprotein multimerin-2/MMRN2 and IGFBP7 ligands. Both ligands play a non-redundant role in CD93-mediated endothelial cell function. Acts as a key regulator of endothelial barrier function through modulating VEGFR2 function. The polypeptide is Complement component C1q receptor (Cd93) (Rattus norvegicus (Rat)).